The sequence spans 625 residues: Coagulation factor XI (625 aa).

Residues 1-18 form the signal peptide; that stretch reads MIFLYQVVHFILFTSVSG. 4 Apple domains span residues 20–103, 110–193, 200–283, and 291–374; these read CVTQ…FKQC, CNKD…LKSC, CIRD…LQSC, and CHSS…LRLC. Intrachain disulfides connect Cys20–Cys103, Cys46–Cys76, Cys50–Cys56, Cys110–Cys193, Cys136–Cys165, Cys140–Cys146, Cys200–Cys283, Cys226–Cys255, Cys230–Cys236, Cys291–Cys374, Cys317–Cys346, Cys321–Cys327, Cys380–Cys500, Cys416–Cys432, Cys514–Cys581, Cys545–Cys560, and Cys571–Cys599. Asn90 and Asn126 each carry an N-linked (GlcNAc...) (complex) asparagine glycan. Asn163 is a glycosylation site (N-linked (GlcNAc...) (complex) asparagine; atypical). One can recognise a Peptidase S1 domain in the interval 388–623; it reads IVGGTASVRG…YVDWILEKTQ (236 aa). His431 functions as the Charge relay system in the catalytic mechanism. N-linked (GlcNAc...) (complex) asparagine glycosylation is present at Asn450. The Charge relay system role is filled by Asp480. N-linked (GlcNAc...) (complex) asparagine glycosylation occurs at Asn491. 547–550 contacts heparin; the sequence is KRYR. Ser575 functions as the Charge relay system in the catalytic mechanism.

This sequence belongs to the peptidase S1 family. Plasma kallikrein subfamily. As to quaternary structure, homodimer; disulfide-linked. Can form non-covalently bonded homodimers. After activation the heavy and light chains are also linked by a disulfide bond. Interacts (activated) with F9 (inactive and activated) in calcium-dependent manner. Forms a heterodimer with SERPINA5. Interacts with Anopheles gambiae D7L2. Interacts (activated) with guianensin, an anticoagulant protein from Simulium guianense saliva. In terms of processing, N-glycosylated on both chains. N-glycosylated sites mainly consist of nonfucosylated sialylated biantennary (in high abundance) and/or triantennary (in low abundance) complex structures. Glycosylation at Asn-163 uses a rare non-canonical Asn-X-Cys glycosite. Post-translationally, activated by factor XIIa (or XII), which cleaves each polypeptide after Arg-387 into the light chain, which contains the active site, and the heavy chain, which associates with high molecular weight (HMW) kininogen. Activated by F12 (activated); the presence of negatively charged surfaces accelerates activation. Activated by F2 (thrombin); the presence of negatively charged surfaces, such as polyphosphate and dextran sulfate, strongly accelerates activation. Autoactivated; the presence of negatively charged surfaces, such as polyphosphate and dextran sulfate, accelerates autoactivation and autolysis. As to expression, isoform 2 is produced by platelets and megakaryocytes but absent from other blood cells.

It is found in the secreted. It catalyses the reaction Selective cleavage of Arg-|-Ala and Arg-|-Val bonds in factor IX to form factor IXa.. Inhibited by SERPINA5. Its function is as follows. Factor XI triggers the middle phase of the intrinsic pathway of blood coagulation by activating factor IX. This is Coagulation factor XI (F11) from Homo sapiens (Human).